The chain runs to 1142 residues: MAEPGGAAGRSHPEDGSASEGEKEGNNESHMVSPPEKDDGQKGEEAVGSTEHPEEVTTQAEAAIEEGEVETEGEAAVEGEEEAVSYGDAESEEEYYYTETSSPEGQISAADTTYPYFSPPQELPGEEAYDSVSGEAGLQGFQQEATGPPESRERRVTSPEPSHGVLGPSEQMGQVTSGPAVGRLTGSTEEPQGQVLPMGVQHRFRLSHGSDIESSDLEEFVSQEPVIPPGVPDAHPREGDLPVFQDQIQQPSTEEGAMAERVESEGSDEEAEDEGSQLVVLDPDHPLMVRFQAALKNYLNRQIEKLKLDLQELVVATKQSRAQRQELGVNLYEVQQHLVHLQKLLEKSHDRHAMASSERRQKEEELQAARALYTKTCAAANEERKKLAALQTEMENLALHLFYMQNIDQDMRDDIRVMTQVVKKAETERIRAEIEKKKQDLYVDQLTTRAQQLEEDIALFEAQYLAQAEDTRILRKAVSEACTEIDAISVEKRRIMQQWASSLVGMKHRDEAHRAVLEALRGCQHQAKSTDGEIEAYKKSIMKEEEKNEKLASILNRTETEATLLQKLTTQCLTKQVALQSQFNTYRLTLQDTEDALSQDQLEQMILTEELQAIRQAIQGELELRRKTDAAIREKLQEHMTSNKTTKYFNQLILRLQKEKTNMMTHLSKINGDIAQTTLDITHTSSRLDAHQKTLVELDQDVKKVNELITNSQSEISRRTILIERKQGLINFLNKQLERMVSELGGEEVGPLELEIKRLSKLIDEHDGKAVQAQVTWLRLQQEMVKVTQEQEEQLASLDASKKELHIMEQKKLRVESKIEQEKKEQKEIEHHMKDLDNDLKKLNMLMNKNRCSSEELEQNNRVTENEFVRSLKASERETIKMQDKLNQLSEEKATLLNQLVEAEHQIMLWEKKIQLAKEMRSSVDSEIGQTEIRAMKGEIHRMKVRLGQLLKQQEKMIRAMELAVARRETVTTQAEGQRKMDRKALTRTDFHHKQLELRRKIRDVRKATDECTKTVLELEETQRNVSSSLLEKQEKLSVIQADFDTLEADLTRLGALKRQNLSEIVALQTRLKHLQAVKEGRYVFLFRSKQSLVLERQRLDKRLALIATILDRVRDEYPQFQEALHKVSQMIANKLESPGPS.

Disordered stretches follow at residues 1–197 (MAEP…QVLP) and 251–274 (PSTEEGAMAERVESEGSDEEAEDE). Composition is skewed to basic and acidic residues over residues 11–27 (SHPEDGSASEGEKEGNN) and 35–55 (PEKDDGQKGEEAVGSTEHPEE). Acidic residues predominate over residues 63–96 (AIEEGEVETEGEAAVEGEEEAVSYGDAESEEEYY). S252 bears the Phosphoserine mark. Residues 265-274 (EGSDEEAEDE) show a composition bias toward acidic residues. Coiled-coil stretches lie at residues 293-319 (AALKNYLNRQIEKLKLDLQELVVATKQ), 349-470 (HDRH…QAED), 526-627 (QAKS…LRRK), 684-950 (TSSR…LGQL), and 1005-1054 (VRKA…LTRL).

It belongs to the CCDC40 family.

The protein localises to the cytoplasm. It localises to the cell projection. Its subcellular location is the cilium. Required for assembly of dynein regulatory complex (DRC) and inner dynein arm (IDA) complexes, which are responsible for ciliary beat regulation, thereby playing a central role in motility in cilia and flagella. Probably acts together with CCDC39 to form a molecular ruler that determines the 96 nanometer (nm) repeat length and arrangements of components in cilia and flagella. Not required for outer dynein arm complexes assembly. Required for axonemal recruitment of CCDC39. This chain is Coiled-coil domain-containing protein 40, found in Homo sapiens (Human).